Here is a 464-residue protein sequence, read N- to C-terminus: Fumarate hydratase class II (464 aa).

Substrate contacts are provided by residues 98–100, 129–132, 139–141, and T187; these read SGT, HPND, and SSN. H188 acts as the Proton donor/acceptor in catalysis. Residue S318 is part of the active site. Substrate is bound by residues S319 and 324-326; that span reads KVN.

Belongs to the class-II fumarase/aspartase family. Fumarase subfamily. As to quaternary structure, homotetramer.

Its subcellular location is the cytoplasm. It catalyses the reaction (S)-malate = fumarate + H2O. The protein operates within carbohydrate metabolism; tricarboxylic acid cycle; (S)-malate from fumarate: step 1/1. Functionally, involved in the TCA cycle. Catalyzes the stereospecific interconversion of fumarate to L-malate. The protein is Fumarate hydratase class II of Pasteurella multocida (strain Pm70).